The primary structure comprises 151 residues: Protein SprT-like (151 aa).

Positions 7-146 (QSLTESIAIK…CGRCGGILKL (140 aa)) constitute a SprT-like domain. H67 contacts Zn(2+). Residue E68 is part of the active site. Residue H71 coordinates Zn(2+).

This sequence belongs to the SprT family. It depends on Zn(2+) as a cofactor.

It localises to the cytoplasm. In Staphylococcus epidermidis (strain ATCC 35984 / DSM 28319 / BCRC 17069 / CCUG 31568 / BM 3577 / RP62A), this protein is Protein SprT-like.